A 353-amino-acid polypeptide reads, in one-letter code: Heat-inducible transcription repressor HrcA (353 aa).

This sequence belongs to the HrcA family.

Negative regulator of class I heat shock genes (grpE-dnaK-dnaJ and groELS operons). Prevents heat-shock induction of these operons. This Synechococcus elongatus (strain ATCC 33912 / PCC 7942 / FACHB-805) (Anacystis nidulans R2) protein is Heat-inducible transcription repressor HrcA.